The following is a 130-amino-acid chain: Protein ApaG (130 aa).

The 125-residue stretch at 3–127 folds into the ApaG domain; the sequence is SAVTRGIEVT…FSLDVPEQRR (125 aa).

This Brucella suis biovar 1 (strain 1330) protein is Protein ApaG.